A 173-amino-acid chain; its full sequence is Shikimate kinase (173 aa).

Gly11–Thr16 serves as a coordination point for ATP. Thr15 lines the Mg(2+) pocket. Residues Asp33, Arg57, and Gly79 each contribute to the substrate site. Arg118 contacts ATP. Arg140 serves as a coordination point for substrate.

Belongs to the shikimate kinase family. Monomer. The cofactor is Mg(2+).

The protein localises to the cytoplasm. It carries out the reaction shikimate + ATP = 3-phosphoshikimate + ADP + H(+). Its pathway is metabolic intermediate biosynthesis; chorismate biosynthesis; chorismate from D-erythrose 4-phosphate and phosphoenolpyruvate: step 5/7. Catalyzes the specific phosphorylation of the 3-hydroxyl group of shikimic acid using ATP as a cosubstrate. This chain is Shikimate kinase, found in Parabacteroides distasonis (strain ATCC 8503 / DSM 20701 / CIP 104284 / JCM 5825 / NCTC 11152).